The sequence spans 909 residues: UPF0182 protein H16_A1615 (909 aa).

The next 7 membrane-spanning stretches (helical) occupy residues 16-36 (TWVV…GLVV), 58-78 (ALLF…SGWL), 114-134 (VAVL…AIAL), 169-189 (WLLL…GLRG), 205-225 (ATHG…SYWL), 246-266 (VHVG…AAAA), and 281-301 (AAAL…PALF).

Belongs to the UPF0182 family.

It is found in the cell membrane. This is UPF0182 protein H16_A1615 from Cupriavidus necator (strain ATCC 17699 / DSM 428 / KCTC 22496 / NCIMB 10442 / H16 / Stanier 337) (Ralstonia eutropha).